Consider the following 260-residue polypeptide: NifU-like protein C1709.19c (260 aa).

The tract at residues 161-231 is nifU; the sequence is IKELIETSIR…IPEVENVVQV (71 aa).

This sequence belongs to the NifU family.

This Schizosaccharomyces pombe (strain 972 / ATCC 24843) (Fission yeast) protein is NifU-like protein C1709.19c.